Reading from the N-terminus, the 114-residue chain is T cell receptor beta variable 4-2 (114 aa).

A signal peptide spans 1–21; that stretch reads MGCRLLCCAVLCLLGAVPMET. Positions 22 to 114 constitute an Ig-like domain; the sequence is GVTQTPRHLV…SALYLCASSQ (93 aa). Residues cysteine 42 and cysteine 110 are joined by a disulfide bond. 2 N-linked (GlcNAc...) asparagine glycosylation sites follow: asparagine 76 and asparagine 89.

As to quaternary structure, alpha-beta TR is a heterodimer composed of an alpha and beta chain; disulfide-linked. The alpha-beta TR is associated with the transmembrane signaling CD3 coreceptor proteins to form the TR-CD3 (TcR or TCR). The assembly of alpha-beta TR heterodimers with CD3 occurs in the endoplasmic reticulum where a single alpha-beta TR heterodimer associates with one CD3D-CD3E heterodimer, one CD3G-CD3E heterodimer and one CD247 homodimer forming a stable octameric structure. CD3D-CD3E and CD3G-CD3E heterodimers preferentially associate with TR alpha and TR beta chains, respectively. The association of the CD247 homodimer is the last step of TcR assembly in the endoplasmic reticulum and is required for transport to the cell surface.

The protein resides in the cell membrane. V region of the variable domain of T cell receptor (TR) beta chain that participates in the antigen recognition. Alpha-beta T cell receptors are antigen specific receptors which are essential to the immune response and are present on the cell surface of T lymphocytes. Recognize peptide-major histocompatibility (MH) (pMH) complexes that are displayed by antigen presenting cells (APC), a prerequisite for efficient T cell adaptive immunity against pathogens. Binding of alpha-beta TR to pMH complex initiates TR-CD3 clustering on the cell surface and intracellular activation of LCK that phosphorylates the ITAM motifs of CD3G, CD3D, CD3E and CD247 enabling the recruitment of ZAP70. In turn ZAP70 phosphorylates LAT, which recruits numerous signaling molecules to form the LAT signalosome. The LAT signalosome propagates signal branching to three major signaling pathways, the calcium, the mitogen-activated protein kinase (MAPK) kinase and the nuclear factor NF-kappa-B (NF-kB) pathways, leading to the mobilization of transcription factors that are critical for gene expression and essential for T cell growth and differentiation. The T cell repertoire is generated in the thymus, by V-(D)-J rearrangement. This repertoire is then shaped by intrathymic selection events to generate a peripheral T cell pool of self-MH restricted, non-autoaggressive T cells. Post-thymic interaction of alpha-beta TR with the pMH complexes shapes TR structural and functional avidity. This is T cell receptor beta variable 4-2 from Homo sapiens (Human).